Reading from the N-terminus, the 191-residue chain is ATP-dependent Clp protease proteolytic subunit 1 (191 aa).

Catalysis depends on S91, which acts as the Nucleophile. H116 is an active-site residue.

The protein belongs to the peptidase S14 family. In terms of assembly, fourteen ClpP subunits assemble into 2 heptameric rings which stack back to back to give a disk-like structure with a central cavity, resembling the structure of eukaryotic proteasomes.

It is found in the cytoplasm. The catalysed reaction is Hydrolysis of proteins to small peptides in the presence of ATP and magnesium. alpha-casein is the usual test substrate. In the absence of ATP, only oligopeptides shorter than five residues are hydrolyzed (such as succinyl-Leu-Tyr-|-NHMec, and Leu-Tyr-Leu-|-Tyr-Trp, in which cleavage of the -Tyr-|-Leu- and -Tyr-|-Trp bonds also occurs).. Its function is as follows. Cleaves peptides in various proteins in a process that requires ATP hydrolysis. Has a chymotrypsin-like activity. Plays a major role in the degradation of misfolded proteins. This Chlamydia pneumoniae (Chlamydophila pneumoniae) protein is ATP-dependent Clp protease proteolytic subunit 1.